We begin with the raw amino-acid sequence, 285 residues long: Type II restriction enzyme Cfr10I (285 aa).

Residues Asp134 and Glu204 each coordinate Mg(2+).

In terms of assembly, homodimer. Mg(2+) serves as cofactor.

The enzyme catalyses Endonucleolytic cleavage of DNA to give specific double-stranded fragments with terminal 5'-phosphates.. An F and P subtype restriction enzyme that recognizes the double-stranded sequence 5'-RCCGGY-3' and cleaves after R-1. The chain is Type II restriction enzyme Cfr10I (cfr10IR) from Citrobacter freundii.